The following is a 265-amino-acid chain: Uroporphyrinogen-III synthase (265 aa).

It belongs to the uroporphyrinogen-III synthase family. Monomer.

It localises to the cytoplasm. The protein resides in the cytosol. It carries out the reaction hydroxymethylbilane = uroporphyrinogen III + H2O. Its pathway is porphyrin-containing compound metabolism; protoporphyrin-IX biosynthesis; coproporphyrinogen-III from 5-aminolevulinate: step 3/4. Its function is as follows. Catalyzes cyclization of the linear tetrapyrrole, hydroxymethylbilane, to the macrocyclic uroporphyrinogen III, the branch point for the various sub-pathways leading to the wide diversity of porphyrins. Porphyrins act as cofactors for a multitude of enzymes that perform a variety of processes within the cell such as methionine synthesis (vitamin B12) or oxygen transport (heme). In Mus musculus (Mouse), this protein is Uroporphyrinogen-III synthase (Uros).